The chain runs to 374 residues: MLRLTSARSIVSPLRKGAFGSIRTLATSVPETQKGVIFYENGGKLEYKDIPVPKPKPNEILINVKYSGVCHTDLHAWKGDWPLPTKLPLVGGHEGAGVVVAMGENVKGWNIGDFAGIKWLNGSCMSCEYCELSNESNCPDADLSGYTHDGSFQQYATADAVQAARIPKGTDLAEVAPILCAGVTVYKALKSANLKAGDWVAISGAAGGLGSLAVQYAKAMGYRVVGIDGGEEKGKLVKQLGGEAFVDFTKTKDMVAEIQEITNGGPHGVINVSVSEAAMNASTQFVRPTGTVVLVGLPAGAVIKSEVFSHVVKSINIKGSYVGNRADTREAINFFANGHVHSPIKVVGLSELPKVYELMEQGKILGRYVVDTSN.

The N-terminal 26 residues, 1 to 26, are a transit peptide targeting the mitochondrion; it reads MLRLTSARSIVSPLRKGAFGSIRTLA. The Zn(2+) site is built by cysteine 70, histidine 93, cysteine 124, cysteine 127, cysteine 130, cysteine 138, and cysteine 180. NAD(+)-binding positions include 204–210, aspartate 228, lysine 233, 295–297, and arginine 367; these read GAAGGLG and VGL.

The protein belongs to the zinc-containing alcohol dehydrogenase family. Homotetramer. It depends on Zn(2+) as a cofactor.

It localises to the mitochondrion matrix. The enzyme catalyses a primary alcohol + NAD(+) = an aldehyde + NADH + H(+). It catalyses the reaction a secondary alcohol + NAD(+) = a ketone + NADH + H(+). The chain is Alcohol dehydrogenase 3, mitochondrial (ADH3) from Kluyveromyces lactis (strain ATCC 8585 / CBS 2359 / DSM 70799 / NBRC 1267 / NRRL Y-1140 / WM37) (Yeast).